The primary structure comprises 178 residues: Inorganic pyrophosphatase (178 aa).

Substrate-binding residues include Lys-30, Arg-44, and Tyr-56. Mg(2+)-binding residues include Asp-66, Asp-71, and Asp-103. Tyr-142 contacts substrate.

The protein belongs to the PPase family. As to quaternary structure, homohexamer. The cofactor is Mg(2+).

Its subcellular location is the cytoplasm. The catalysed reaction is diphosphate + H2O = 2 phosphate + H(+). Catalyzes the hydrolysis of inorganic pyrophosphate (PPi) forming two phosphate ions. This is Inorganic pyrophosphatase from Bradyrhizobium diazoefficiens (strain JCM 10833 / BCRC 13528 / IAM 13628 / NBRC 14792 / USDA 110).